Reading from the N-terminus, the 277-residue chain is uncharacterized protein (277 aa).

The SWIM-type zinc-finger motif lies at 139–167; it reads TARELSLDCSCPDYAVPCKHLAATFYLLA.

This is an uncharacterized protein from Mycobacterium tuberculosis (strain ATCC 25618 / H37Rv).